A 264-amino-acid polypeptide reads, in one-letter code: Alkaline ceramidase 1 (264 aa).

Residues 1–27 (MPSIFAYQSSEVDWCESNFQYSELVAE) lie on the Lumenal side of the membrane. The Ca(2+) site is built by D13, W14, E16, N18, and E27. A helical transmembrane segment spans residues 28-48 (FYNTFSNIPFFIFGPLMMLLM). Topologically, residues 49 to 57 (HPYAQKRSR) are cytoplasmic. Residues 58–78 (YIYVVWVLFMIIGLFSMYFHM) form a helical membrane-spanning segment. H77 contributes to the Zn(2+) binding site. Residues 79–81 (TLS) are Lumenal-facing. Residues 82–102 (FLGQLLDEIAILWLLGSGYSI) form a helical membrane-spanning segment. At 103-119 (WMPRCYFPSFLGGNRSQ) the chain is on the cytoplasmic side. Residues 120–137 (FIRLVFITTVVSTLLSFL) form a helical membrane-spanning segment. Position 138 (R138) is a topological domain, lumenal. The helical transmembrane segment at 139 to 159 (PTVNAYALNSIALHILYIVCQ) threads the bilayer. The Cytoplasmic segment spans residues 160–176 (EYRKTSNKELRHLIEVS). A helical transmembrane segment spans residues 177–197 (VVLWAVALTSWISDRLLCSFW). Topologically, residues 198 to 206 (QRIHFFYLH) are lumenal. The Zn(2+) site is built by H206 and H210. The helical transmembrane segment at 207 to 227 (SIWHVLISITFPYGMVTMALV) threads the bilayer. Residues 228 to 264 (DANYEMPGETLKVRYWPRDSWPVGLPYVEIRGDDKDC) lie on the Cytoplasmic side of the membrane.

It belongs to the alkaline ceramidase family. Zn(2+) serves as cofactor. In terms of tissue distribution, mainly expressed in epidermis.

The protein resides in the endoplasmic reticulum membrane. The enzyme catalyses an N-acylsphing-4-enine + H2O = sphing-4-enine + a fatty acid. It catalyses the reaction N-tetracosanoyl-sphing-4-enine + H2O = tetracosanoate + sphing-4-enine. The catalysed reaction is an N-acylsphinganine + H2O = sphinganine + a fatty acid. It carries out the reaction N-(9Z-octadecenoyl)-sphing-4-enine + H2O = sphing-4-enine + (9Z)-octadecenoate. The enzyme catalyses N-(15Z-tetracosenoyl)-sphing-4-enine + H2O = (15Z)-tetracosenoate + sphing-4-enine. It participates in lipid metabolism; sphingolipid metabolism. Inhibited by sphingosine. Activity is Ca(2+)-dependent. Its function is as follows. Endoplasmic reticulum ceramidase that catalyzes the hydrolysis of ceramides into sphingosine and free fatty acids at alkaline pH. Ceramides, sphingosine, and its phosphorylated form sphingosine-1-phosphate are bioactive lipids that mediate cellular signaling pathways regulating several biological processes including cell proliferation, apoptosis and differentiation. Exhibits a strong substrate specificity towards the natural stereoisomer of ceramides with D-erythro-sphingosine as a backbone and has a higher activity towards very long-chain unsaturated fatty acids like the C24:1-ceramide. May also hydrolyze dihydroceramides to produce dihydrosphingosine. ACER1 is a skin-specific ceramidase that regulates the levels of ceramides, sphingosine and sphingosine-1-phosphate in the epidermis, mediates the calcium-induced differentiation of epidermal keratinocytes and more generally plays an important role in skin homeostasis. The protein is Alkaline ceramidase 1 of Homo sapiens (Human).